We begin with the raw amino-acid sequence, 760 residues long: Serine/threonine-protein kinase Haspin homolog ALK1 (760 aa).

2 positions are modified to phosphoserine: Ser76 and Ser79. 4 disordered regions span residues Ser76–Trp100, Ser123–Asp153, Asp187–Ser264, and Lys362–Ser408. Polar residues predominate over residues Ala78 to Asn95. Residues Lys200–Asn202 carry the KEN box motif. Residues Lys209–Glu220 are compositionally biased toward polar residues. The D box signature appears at Arg224–Asn232. Residues Pro237–Ala250 show a composition bias toward polar residues. Residues Ser251 to Ser264 show a composition bias toward low complexity. Basic residues predominate over residues Lys362 to Gly386. Residues Asn398–Ser408 are compositionally biased toward low complexity. The 293-residue stretch at Asn468 to Lys760 folds into the Protein kinase domain. Residues Ile474–Val482 and Lys510 each bind ATP.

Belongs to the protein kinase superfamily. Ser/Thr protein kinase family. Haspin subfamily. Post-translationally, periodically phosphorylated during the cell cycle with a phosphorylation peak during mitosis and hyperphosphorylated after DNA damage.

It catalyses the reaction L-seryl-[protein] + ATP = O-phospho-L-seryl-[protein] + ADP + H(+). It carries out the reaction L-threonyl-[protein] + ATP = O-phospho-L-threonyl-[protein] + ADP + H(+). Serine/threonine haspin-like protein kinase involved in cell cycle regulation. This chain is Serine/threonine-protein kinase Haspin homolog ALK1 (ALK1), found in Saccharomyces cerevisiae (strain ATCC 204508 / S288c) (Baker's yeast).